Reading from the N-terminus, the 211-residue chain is Molybdenum cofactor guanylyltransferase (211 aa).

GTP-binding positions include 12 to 14, Lys-25, Asn-55, Asp-73, and Asp-103; that span reads LAG. Asp-103 contacts Mg(2+).

Belongs to the MobA family. Monomer. The cofactor is Mg(2+).

It localises to the cytoplasm. It carries out the reaction Mo-molybdopterin + GTP + H(+) = Mo-molybdopterin guanine dinucleotide + diphosphate. Transfers a GMP moiety from GTP to Mo-molybdopterin (Mo-MPT) cofactor (Moco or molybdenum cofactor) to form Mo-molybdopterin guanine dinucleotide (Mo-MGD) cofactor. This Albidiferax ferrireducens (strain ATCC BAA-621 / DSM 15236 / T118) (Rhodoferax ferrireducens) protein is Molybdenum cofactor guanylyltransferase.